Consider the following 213-residue polypeptide: tRNA (guanine-N(7)-)-methyltransferase (213 aa).

Aspartate 40, glutamate 65, asparagine 92, and aspartate 118 together coordinate S-adenosyl-L-methionine. The active site involves aspartate 118. Lysine 122 and aspartate 154 together coordinate substrate.

The protein belongs to the class I-like SAM-binding methyltransferase superfamily. TrmB family.

It carries out the reaction guanosine(46) in tRNA + S-adenosyl-L-methionine = N(7)-methylguanosine(46) in tRNA + S-adenosyl-L-homocysteine. Its pathway is tRNA modification; N(7)-methylguanine-tRNA biosynthesis. Catalyzes the formation of N(7)-methylguanine at position 46 (m7G46) in tRNA. The polypeptide is tRNA (guanine-N(7)-)-methyltransferase (Synechococcus elongatus (strain ATCC 33912 / PCC 7942 / FACHB-805) (Anacystis nidulans R2)).